The following is a 136-amino-acid chain: Large ribosomal subunit protein uL16c (136 aa).

Positions 1-20 (MLSPKRTRFRKQHRGRMKGK) are disordered.

The protein belongs to the universal ribosomal protein uL16 family. Part of the 50S ribosomal subunit.

It is found in the plastid. It localises to the chloroplast. The sequence is that of Large ribosomal subunit protein uL16c from Lolium perenne (Perennial ryegrass).